Here is a 48-residue protein sequence, read N- to C-terminus: DNA-directed RNA polymerase subunit Rpo12 (48 aa).

Zn(2+) is bound by residues C9, C26, and C29.

It belongs to the archaeal Rpo12/eukaryotic RPC10 RNA polymerase subunit family. Part of the RNA polymerase complex. It depends on Zn(2+) as a cofactor.

The protein resides in the cytoplasm. It carries out the reaction RNA(n) + a ribonucleoside 5'-triphosphate = RNA(n+1) + diphosphate. Its function is as follows. DNA-dependent RNA polymerase (RNAP) catalyzes the transcription of DNA into RNA using the four ribonucleoside triphosphates as substrates. This Saccharolobus islandicus (strain Y.N.15.51 / Yellowstone #2) (Sulfolobus islandicus) protein is DNA-directed RNA polymerase subunit Rpo12.